Reading from the N-terminus, the 513-residue chain is ATP synthase subunit alpha (513 aa).

169–176 (GDRQTGKT) contributes to the ATP binding site.

Belongs to the ATPase alpha/beta chains family. F-type ATPases have 2 components, CF(1) - the catalytic core - and CF(0) - the membrane proton channel. CF(1) has five subunits: alpha(3), beta(3), gamma(1), delta(1), epsilon(1). CF(0) has three main subunits: a(1), b(2) and c(9-12). The alpha and beta chains form an alternating ring which encloses part of the gamma chain. CF(1) is attached to CF(0) by a central stalk formed by the gamma and epsilon chains, while a peripheral stalk is formed by the delta and b chains.

The protein localises to the cell inner membrane. It catalyses the reaction ATP + H2O + 4 H(+)(in) = ADP + phosphate + 5 H(+)(out). Produces ATP from ADP in the presence of a proton gradient across the membrane. The alpha chain is a regulatory subunit. The sequence is that of ATP synthase subunit alpha from Haemophilus influenzae (strain PittEE).